A 493-amino-acid chain; its full sequence is Acetylcholine receptor subunit epsilon (493 aa).

Residues 1–20 (MARAPLGVLLLLGLLGRGVG) form the signal peptide. Residues 21–239 (KNEELRLYHH…VIYSLIIRRK (219 aa)) are Extracellular-facing. N-linked (GlcNAc...) asparagine glycosylation is found at Asn-86 and Asn-161. The cysteines at positions 148 and 162 are disulfide-linked. The helical transmembrane segment at 240-264 (PLFYVINIIVPCVLISGLVLLAYFL) threads the bilayer. The Cytoplasmic portion of the chain corresponds to 265-272 (PAQAGGQK). The helical transmembrane segment at 273–291 (CTVSINVLLAQTVFLFLIA) threads the bilayer. At 292 to 306 (QKIPETSLSVPLLGR) the chain is on the extracellular side. Residues 307-328 (FLIFVMVVATLIVMNCVIVLNV) traverse the membrane as a helical segment. Residues 329 to 456 (SQRTPTTHAM…WVRMGNALDN (128 aa)) lie on the Cytoplasmic side of the membrane. A helical membrane pass occupies residues 457-480 (ICFWAALVLFSVGSSLIFLGAYFN). Topologically, residues 481-493 (RVPDLPYAPCIQP) are extracellular.

The protein belongs to the ligand-gated ion channel (TC 1.A.9) family. Acetylcholine receptor (TC 1.A.9.1) subfamily. Epsilon/CHRNE sub-subfamily. As to quaternary structure, pentamer of two alpha chains, and one each of the beta, delta, and gamma (in immature muscle) or epsilon (in mature muscle) chains. The muscle heteropentamer composed of alpha-1, beta-1, delta, epsilon subunits interacts with the alpha-conotoxin ImII.

Its subcellular location is the postsynaptic cell membrane. It is found in the cell membrane. The enzyme catalyses K(+)(in) = K(+)(out). It catalyses the reaction Na(+)(in) = Na(+)(out). In terms of biological role, after binding acetylcholine, the AChR responds by an extensive change in conformation that affects all subunits and leads to opening of an ion-conducting channel across the plasma membrane. The chain is Acetylcholine receptor subunit epsilon from Homo sapiens (Human).